We begin with the raw amino-acid sequence, 346 residues long: Hydroxymethylglutaryl-CoA synthase (346 aa).

Asp-28 lines the (3S)-3-hydroxy-3-methylglutaryl-CoA pocket. The active-site Proton donor/acceptor is Glu-80. Residues Cys-112 and Thr-153 each coordinate (3S)-3-hydroxy-3-methylglutaryl-CoA. The active-site Acyl-thioester intermediate is Cys-112. Arg-199 lines the CoA pocket. Residues Thr-201 and His-234 each coordinate (3S)-3-hydroxy-3-methylglutaryl-CoA. Residue His-234 is the Proton donor/acceptor of the active site. Lys-239 provides a ligand contact to CoA. The (3S)-3-hydroxy-3-methylglutaryl-CoA site is built by Lys-243, Asn-266, and Ser-296.

It belongs to the thiolase-like superfamily. Archaeal HMG-CoA synthase family. As to quaternary structure, interacts with acetoacetyl-CoA thiolase that catalyzes the precedent step in the pathway and with a DUF35 protein. The acetoacetyl-CoA thiolase/HMG-CoA synthase complex channels the intermediate via a fused CoA-binding site, which allows for efficient coupling of the endergonic thiolase reaction with the exergonic HMGCS reaction.

The enzyme catalyses acetoacetyl-CoA + acetyl-CoA + H2O = (3S)-3-hydroxy-3-methylglutaryl-CoA + CoA + H(+). It participates in metabolic intermediate biosynthesis; (R)-mevalonate biosynthesis; (R)-mevalonate from acetyl-CoA: step 2/3. Functionally, catalyzes the condensation of acetyl-CoA with acetoacetyl-CoA to form 3-hydroxy-3-methylglutaryl-CoA (HMG-CoA). Functions in the mevalonate (MVA) pathway leading to isopentenyl diphosphate (IPP), a key precursor for the biosynthesis of isoprenoid compounds that are building blocks of archaeal membrane lipids. This Methanothermobacter thermautotrophicus (strain ATCC 29096 / DSM 1053 / JCM 10044 / NBRC 100330 / Delta H) (Methanobacterium thermoautotrophicum) protein is Hydroxymethylglutaryl-CoA synthase.